The sequence spans 133 residues: Large ribosomal subunit protein uL22c (133 aa).

It belongs to the universal ribosomal protein uL22 family. As to quaternary structure, part of the 50S ribosomal subunit.

The protein localises to the plastid. It is found in the chloroplast. This protein binds specifically to 23S rRNA. Its function is as follows. The globular domain of the protein is located near the polypeptide exit tunnel on the outside of the subunit, while an extended beta-hairpin is found that lines the wall of the exit tunnel in the center of the 70S ribosome. The chain is Large ribosomal subunit protein uL22c (rpl22) from Manihot esculenta (Cassava).